A 428-amino-acid chain; its full sequence is Glutamate-1-semialdehyde 2,1-aminomutase (428 aa).

K265 bears the N6-(pyridoxal phosphate)lysine mark.

This sequence belongs to the class-III pyridoxal-phosphate-dependent aminotransferase family. HemL subfamily. Homodimer. Pyridoxal 5'-phosphate serves as cofactor.

It is found in the cytoplasm. It catalyses the reaction (S)-4-amino-5-oxopentanoate = 5-aminolevulinate. Its pathway is porphyrin-containing compound metabolism; protoporphyrin-IX biosynthesis; 5-aminolevulinate from L-glutamyl-tRNA(Glu): step 2/2. The protein is Glutamate-1-semialdehyde 2,1-aminomutase of Hamiltonella defensa subsp. Acyrthosiphon pisum (strain 5AT).